We begin with the raw amino-acid sequence, 530 residues long: Glutamate--cysteine ligase (530 aa).

This sequence belongs to the glutamate--cysteine ligase type 1 family. Type 1 subfamily.

It carries out the reaction L-cysteine + L-glutamate + ATP = gamma-L-glutamyl-L-cysteine + ADP + phosphate + H(+). The protein operates within sulfur metabolism; glutathione biosynthesis; glutathione from L-cysteine and L-glutamate: step 1/2. The polypeptide is Glutamate--cysteine ligase (Azotobacter vinelandii (strain DJ / ATCC BAA-1303)).